The sequence spans 37 residues: Large ribosomal subunit protein bL36 (37 aa).

Belongs to the bacterial ribosomal protein bL36 family.

The sequence is that of Large ribosomal subunit protein bL36 from Rhodococcus erythropolis (strain PR4 / NBRC 100887).